The chain runs to 93 residues: Phosphoribosyl-ATP pyrophosphatase (93 aa).

Belongs to the PRA-PH family.

Its subcellular location is the cytoplasm. The catalysed reaction is 1-(5-phospho-beta-D-ribosyl)-ATP + H2O = 1-(5-phospho-beta-D-ribosyl)-5'-AMP + diphosphate + H(+). It functions in the pathway amino-acid biosynthesis; L-histidine biosynthesis; L-histidine from 5-phospho-alpha-D-ribose 1-diphosphate: step 2/9. The chain is Phosphoribosyl-ATP pyrophosphatase from Metallosphaera sedula (strain ATCC 51363 / DSM 5348 / JCM 9185 / NBRC 15509 / TH2).